The chain runs to 447 residues: tRNA-2-methylthio-N(6)-dimethylallyladenosine synthase (447 aa).

Positions 3 to 120 constitute an MTTase N-terminal domain; that stretch reads KKLYIETHGC…LPEMIDAART (118 aa). Residues Cys-12, Cys-49, Cys-83, Cys-157, Cys-161, and Cys-164 each coordinate [4Fe-4S] cluster. The region spanning 143–375 is the Radical SAM core domain; that stretch reads RVDGPSAFVS…QHRINQYGFE (233 aa). One can recognise a TRAM domain in the interval 378–442; sequence RRMVGTVQRI…PHSLRGTLLD (65 aa).

This sequence belongs to the methylthiotransferase family. MiaB subfamily. Monomer. [4Fe-4S] cluster is required as a cofactor.

The protein localises to the cytoplasm. The enzyme catalyses N(6)-dimethylallyladenosine(37) in tRNA + (sulfur carrier)-SH + AH2 + 2 S-adenosyl-L-methionine = 2-methylsulfanyl-N(6)-dimethylallyladenosine(37) in tRNA + (sulfur carrier)-H + 5'-deoxyadenosine + L-methionine + A + S-adenosyl-L-homocysteine + 2 H(+). Functionally, catalyzes the methylthiolation of N6-(dimethylallyl)adenosine (i(6)A), leading to the formation of 2-methylthio-N6-(dimethylallyl)adenosine (ms(2)i(6)A) at position 37 in tRNAs that read codons beginning with uridine. The polypeptide is tRNA-2-methylthio-N(6)-dimethylallyladenosine synthase (Ectopseudomonas mendocina (strain ymp) (Pseudomonas mendocina)).